A 175-amino-acid chain; its full sequence is Protein LpfE (175 aa).

Residues 1-20 (MKNLHALMPACLLLTASAMA) form the signal peptide.

It belongs to the fimbrial protein family.

It is found in the fimbrium. This is Protein LpfE (lpfE) from Salmonella typhimurium (strain LT2 / SGSC1412 / ATCC 700720).